A 378-amino-acid chain; its full sequence is D-galactarolactone cycloisomerase (378 aa).

3 residues coordinate Mg(2+): aspartate 194, glutamate 220, and glutamate 246. Histidine 296 serves as the catalytic Proton acceptor.

The protein belongs to the mandelate racemase/muconate lactonizing enzyme family. In terms of assembly, homooctamer. Mg(2+) serves as cofactor.

It carries out the reaction D-glucaro-1,4-lactone = 5-dehydro-4-deoxy-D-glucarate + H(+). It catalyses the reaction D-galactaro-1,4-lactone = 5-dehydro-4-deoxy-D-glucarate + H(+). Its pathway is carbohydrate acid metabolism; D-galacturonate degradation via prokaryotic oxidative pathway. Functionally, catalyzes the ring opening of D-galactaro-1,4-lactone to yield 5-keto-4-deoxy-D-glucarate (KDG) via a beta-elimination reaction. This is a step in the oxidative degradation pathway of D-galacturonate, which allows A.tumefaciens to utilize D-galacturonate as a sole carbon source. To a lesser extent, can also use D-glucaro-1,4-lactone as substrate to produce KDG, but cannot use D-galactaro-1,5-lactone, D-glucaro-6,3-lactone and linear D-glucarate. The chain is D-galactarolactone cycloisomerase (gci) from Agrobacterium fabrum (strain C58 / ATCC 33970) (Agrobacterium tumefaciens (strain C58)).